A 204-amino-acid chain; its full sequence is Ribonuclease HII (204 aa).

Residues 1–197 (MILGIDEAGR…KNRILNPKLL (197 aa)) enclose the RNase H type-2 domain. A divalent metal cation-binding residues include Asp-6, Glu-7, and Asp-103.

The protein belongs to the RNase HII family. Mn(2+) is required as a cofactor. Requires Mg(2+) as cofactor.

Its subcellular location is the cytoplasm. It carries out the reaction Endonucleolytic cleavage to 5'-phosphomonoester.. In terms of biological role, endonuclease that specifically degrades the RNA of RNA-DNA hybrids. The protein is Ribonuclease HII of Helicobacter pylori (strain Shi470).